Here is a 125-residue protein sequence, read N- to C-terminus: Histone H2A (125 aa).

Residues 1 to 18 show a composition bias toward basic residues; that stretch reads MSGRGKGGKAKAKAKSRS. The interval 1-21 is disordered; the sequence is MSGRGKGGKAKAKAKSRSSRA. Position 2 is an N-acetylserine (serine 2). Glutamine 104 bears the N5-methylglutamine mark.

It belongs to the histone H2A family. The nucleosome is a histone octamer containing two molecules each of H2A, H2B, H3 and H4 assembled in one H3-H4 heterotetramer and two H2A-H2B heterodimers. The octamer wraps approximately 147 bp of DNA.

The protein resides in the nucleus. The protein localises to the chromosome. Functionally, core component of nucleosome. Nucleosomes wrap and compact DNA into chromatin, limiting DNA accessibility to the cellular machineries which require DNA as a template. Histones thereby play a central role in transcription regulation, DNA repair, DNA replication and chromosomal stability. DNA accessibility is regulated via a complex set of post-translational modifications of histones, also called histone code, and nucleosome remodeling. In Mytilus trossulus (Blue mussel), this protein is Histone H2A.